Consider the following 399-residue polypeptide: CCA-adding enzyme (399 aa).

Gly-32 and Arg-35 together coordinate ATP. The CTP site is built by Gly-32 and Arg-35. Mg(2+)-binding residues include Asp-45 and Asp-47. Residues Arg-116, Asp-159, Arg-162, Arg-165, and Arg-168 each coordinate ATP. 5 residues coordinate CTP: Arg-116, Asp-159, Arg-162, Arg-165, and Arg-168.

The protein belongs to the tRNA nucleotidyltransferase/poly(A) polymerase family. Bacterial CCA-adding enzyme type 3 subfamily. In terms of assembly, homodimer. The cofactor is Mg(2+).

It catalyses the reaction a tRNA precursor + 2 CTP + ATP = a tRNA with a 3' CCA end + 3 diphosphate. The enzyme catalyses a tRNA with a 3' CCA end + 2 CTP + ATP = a tRNA with a 3' CCACCA end + 3 diphosphate. Functionally, catalyzes the addition and repair of the essential 3'-terminal CCA sequence in tRNAs without using a nucleic acid template. Adds these three nucleotides in the order of C, C, and A to the tRNA nucleotide-73, using CTP and ATP as substrates and producing inorganic pyrophosphate. tRNA 3'-terminal CCA addition is required both for tRNA processing and repair. Also involved in tRNA surveillance by mediating tandem CCA addition to generate a CCACCA at the 3' terminus of unstable tRNAs. While stable tRNAs receive only 3'-terminal CCA, unstable tRNAs are marked with CCACCA and rapidly degraded. This chain is CCA-adding enzyme, found in Streptococcus pneumoniae (strain CGSP14).